Here is a 193-residue protein sequence, read N- to C-terminus: MAAVVGKLAPSFTCKALVDGELKDVSLSDYRGKYVILFFYPMDFTFVCPTEIIAFNDRADEFHQRGCQLLACSTDSGYCHLAWNNVSRKEGGVQGMRIPMLADTNHKISRDYGVLIEDQGIALRGLFIIDDKGVLRQITINDLPVGRSVDEALRLLDAFQFTDKHGEVCPANWQPGSKTFKPSAGDLKSFMSS.

In terms of domain architecture, Thioredoxin spans 3–161 (AVVGKLAPSF…ALRLLDAFQF (159 aa)). The active-site Cysteine sulfenic acid (-SOH) intermediate is cysteine 48.

Belongs to the peroxiredoxin family. AhpC/Prx1 subfamily. Homodimer; disulfide-linked, upon oxidation.

It carries out the reaction a hydroperoxide + [thioredoxin]-dithiol = an alcohol + [thioredoxin]-disulfide + H2O. Its function is as follows. Thiol-specific peroxidase that catalyzes the reduction of hydrogen peroxide and organic hydroperoxides to water and alcohols, respectively. Plays a role in cell protection against oxidative stress by detoxifying peroxides and as sensor of hydrogen peroxide-mediated signaling events. This Echinococcus granulosus (Hydatid tapeworm) protein is Thioredoxin peroxidase (TPX).